Reading from the N-terminus, the 116-residue chain is Iron-sulfur cluster insertion protein ErpA (116 aa).

Iron-sulfur cluster-binding residues include C44, C108, and C110.

Belongs to the HesB/IscA family. In terms of assembly, homodimer. Iron-sulfur cluster is required as a cofactor.

In terms of biological role, required for insertion of 4Fe-4S clusters for at least IspG. The chain is Iron-sulfur cluster insertion protein ErpA from Pseudomonas entomophila (strain L48).